The primary structure comprises 73 residues: uncharacterized protein (73 aa).

Residues 1 to 22 form the signal peptide; it reads MKILGVTGFILICLLAISVLMD. A helical transmembrane segment spans residues 44–66; the sequence is TFAEWVVLLFFVLVLVREMYVIY.

The protein localises to the membrane. This is an uncharacterized protein from Bacillus subtilis (strain 168).